A 304-amino-acid chain; its full sequence is DCN1-like protein 3 (304 aa).

Disordered regions lie at residues methionine 1 to serine 87 and valine 285 to threonine 304. Glycine 2 carries the N-myristoyl glycine lipid modification. Residues serine 86–methionine 278 enclose the DCUN1 domain.

In terms of assembly, part of a complex containing DCUN1D3, CUL3 and RBX1. Interacts (via the DCUN1 domain) with the unneddylated cullins: interacts with CUL1, CUL2, CUL3, CUL4A, CUL4B and CUL5; these interactions promote the cullin neddylation and the identity of the cullin dictates the affinity of the interaction. Interacts preferentially with CUL3; this interaction triggers the relocalization of CUL3 to the cell membrane where CUL3 is neddylated. Interacts (via DCUN1 domain) with RBX1. May also interact with regulators or subunits of cullin-RING ligases such as RNF7, ELOB and DDB1; these interactions are bridged by cullins. Interacts (via DCUN1 domain) with CAND1; this interaction is bridged by cullins and strongly inhibits cullin neddylation. These CAND-cullin-DCNL complexes can only be neddylated in the presence of a substrate adapter. Interacts (via DCUN1 domain) with the N-terminally acetylated form of UBE2M and UBE2F.

The protein resides in the cell membrane. Its subcellular location is the cytoplasm. It localises to the nucleus. It is found in the perinuclear region. Contributes to the neddylation of all cullins by transferring NEDD8 from N-terminally acetylated NEDD8-conjugating E2s enzyme to different cullin C-terminal domain-RBX complexes and may play a role in the cell cycle progression by regulating the SCF ubiquitin E3 ligase complex, after UV damage. At the cell membrane, can promote and as well inhibit cullins neddylation. The chain is DCN1-like protein 3 from Rattus norvegicus (Rat).